Consider the following 271-residue polypeptide: MNGESKRIVLGVQYDGTPWQGWQTQLNGLTVQDRLEFALSKFTLQTVSTVCAGRTDAGVHGLEQVVHFDTTLERDMSSWVRGVNTFLPPSIAVRWATEVAHNPDEQDNFHARFSARSRMYQYVLYNNPVRSPLLEGKAGWVFRKLDVERMRTAAQHLLGEHDFSTFRSVQCQAKSPVKSMYSIKIEQRGDLIMFTLHANAFLHHMVRNIVGSLIYVGNGAQQPDWLKELLDGRDRKFAAPTFMPDGLYLAKIDYDPKWQLPQLEVQNFLWS.

D56 functions as the Nucleophile in the catalytic mechanism. Y120 is a substrate binding site.

Belongs to the tRNA pseudouridine synthase TruA family. As to quaternary structure, homodimer.

It carries out the reaction uridine(38/39/40) in tRNA = pseudouridine(38/39/40) in tRNA. Functionally, formation of pseudouridine at positions 38, 39 and 40 in the anticodon stem and loop of transfer RNAs. The sequence is that of tRNA pseudouridine synthase A from Janthinobacterium sp. (strain Marseille) (Minibacterium massiliensis).